The sequence spans 597 residues: Elongation factor 4 (597 aa).

The 183-residue stretch at 2–184 (KNIRNFSIIA…EVVNKIPPPK (183 aa)) folds into the tr-type G domain. GTP contacts are provided by residues 14–19 (DHGKST) and 131–134 (NKID).

This sequence belongs to the TRAFAC class translation factor GTPase superfamily. Classic translation factor GTPase family. LepA subfamily.

The protein resides in the cell inner membrane. It carries out the reaction GTP + H2O = GDP + phosphate + H(+). Functionally, required for accurate and efficient protein synthesis under certain stress conditions. May act as a fidelity factor of the translation reaction, by catalyzing a one-codon backward translocation of tRNAs on improperly translocated ribosomes. Back-translocation proceeds from a post-translocation (POST) complex to a pre-translocation (PRE) complex, thus giving elongation factor G a second chance to translocate the tRNAs correctly. Binds to ribosomes in a GTP-dependent manner. The chain is Elongation factor 4 from Chromobacterium violaceum (strain ATCC 12472 / DSM 30191 / JCM 1249 / CCUG 213 / NBRC 12614 / NCIMB 9131 / NCTC 9757 / MK).